The primary structure comprises 574 residues: Amino-acid acetyltransferase, mitochondrial (574 aa).

A mitochondrion-targeting transit peptide spans 1–13 (MWRRIFAHELKYD). The N-acetyltransferase domain maps to 392 to 560 (KGAKPSSNSP…KRLREFMRSV (169 aa)).

It belongs to the acetyltransferase family. As to quaternary structure, interacts with the acetylglutamate kinase chain of AGR5,6.

It is found in the mitochondrion. It catalyses the reaction L-glutamate + acetyl-CoA = N-acetyl-L-glutamate + CoA + H(+). It participates in amino-acid biosynthesis; L-arginine biosynthesis; N(2)-acetyl-L-ornithine from L-glutamate: step 1/4. Feedback inhibition by L-arginine. Its function is as follows. N-acetylglutamate synthase involved in arginine biosynthesis. The protein is Amino-acid acetyltransferase, mitochondrial (ARG2) of Saccharomyces cerevisiae (strain RM11-1a) (Baker's yeast).